Here is a 450-residue protein sequence, read N- to C-terminus: Trigger factor (450 aa).

The region spanning 163-249 (EDFVLIDYQG…LKEIQEQILP (87 aa)) is the PPIase FKBP-type domain. Over residues 431-443 (PEVETEVSESAAD) the composition is skewed to acidic residues. Positions 431–450 (PEVETEVSESAADVEDKTDQ) are disordered.

It belongs to the FKBP-type PPIase family. Tig subfamily.

It is found in the cytoplasm. It catalyses the reaction [protein]-peptidylproline (omega=180) = [protein]-peptidylproline (omega=0). Its function is as follows. Involved in protein export. Acts as a chaperone by maintaining the newly synthesized protein in an open conformation. Functions as a peptidyl-prolyl cis-trans isomerase. The chain is Trigger factor from Desulforapulum autotrophicum (strain ATCC 43914 / DSM 3382 / VKM B-1955 / HRM2) (Desulfobacterium autotrophicum).